The sequence spans 313 residues: Chemotaxis protein CheV2 (313 aa).

Residues 16–172 (EAQFLCFRLD…VEKMISDVFP (157 aa)) enclose the CheW-like domain. The 121-residue stretch at 193–313 (LILIAEDSLS…IHEMLKKTLS (121 aa)) folds into the Response regulatory domain. A 4-aspartylphosphate modification is found at D246.

Phosphorylated; probably by transfer of CheAY phosphate group.

Functionally, plays a role in chemotaxis signal transduction system in order to colonize the host stomach. May act as a phosphate sink to control the flow of phosphate to CheAY. In Helicobacter pylori (strain ATCC 700392 / 26695) (Campylobacter pylori), this protein is Chemotaxis protein CheV2.